The chain runs to 196 residues: CMRF35-like molecule 2 (196 aa).

A signal peptide spans 1–17 (MRLCAGLLLLCFQGCLS). The region spanning 18-122 (LTGPGSVSGY…DSWSRDPSVS (105 aa)) is the Ig-like V-type domain. Residues 18 to 171 (LTGPGSVSGY…QLWSLLSSIQ (154 aa)) are Extracellular-facing. Cysteine 36 and cysteine 104 are disulfide-bonded. N-linked (GlcNAc...) asparagine glycosylation is present at asparagine 84. Residues 172–192 (FQVLVFLKLPLFLSMLCAIFW) form a helical membrane-spanning segment. The Cytoplasmic portion of the chain corresponds to 193–196 (VNRL).

It belongs to the CD300 family. As to quaternary structure, interacts with TYROBP.

It localises to the cell membrane. Its function is as follows. Probably acts as an activating receptor. In Mus musculus (Mouse), this protein is CMRF35-like molecule 2 (Cd300e).